The primary structure comprises 308 residues: Electron transfer flavoprotein subunit alpha (308 aa).

252–280 (LYVAVGISGAIQHLAGMKDSKVIVAINKD) contributes to the FAD binding site.

This sequence belongs to the ETF alpha-subunit/FixB family. In terms of assembly, heterodimer of an alpha and a beta subunit. It depends on FAD as a cofactor.

Functionally, the electron transfer flavoprotein serves as a specific electron acceptor for other dehydrogenases. It transfers the electrons to the main respiratory chain via ETF-ubiquinone oxidoreductase (ETF dehydrogenase). This is Electron transfer flavoprotein subunit alpha (etfA) from Paracoccus denitrificans.